Consider the following 124-residue polypeptide: Small ribosomal subunit protein uS12 (124 aa).

A 3-methylthioaspartic acid modification is found at D89.

It belongs to the universal ribosomal protein uS12 family. Part of the 30S ribosomal subunit. Contacts proteins S8 and S17. May interact with IF1 in the 30S initiation complex.

Its function is as follows. With S4 and S5 plays an important role in translational accuracy. In terms of biological role, interacts with and stabilizes bases of the 16S rRNA that are involved in tRNA selection in the A site and with the mRNA backbone. Located at the interface of the 30S and 50S subunits, it traverses the body of the 30S subunit contacting proteins on the other side and probably holding the rRNA structure together. The combined cluster of proteins S8, S12 and S17 appears to hold together the shoulder and platform of the 30S subunit. The polypeptide is Small ribosomal subunit protein uS12 (Photobacterium profundum (strain SS9)).